A 282-amino-acid chain; its full sequence is Pantothenate synthetase (282 aa).

Position 29-36 (29-36) interacts with ATP; it reads MGFLHEGH. The active-site Proton donor is the His36. Position 60 (Gln60) interacts with (R)-pantoate. Gln60 is a beta-alanine binding site. ATP is bound at residue 146-149; sequence GEKD. Gln152 is a binding site for (R)-pantoate. ATP is bound by residues Ile175 and 183 to 186; that span reads KSSR.

It belongs to the pantothenate synthetase family. In terms of assembly, homodimer.

It localises to the cytoplasm. The catalysed reaction is (R)-pantoate + beta-alanine + ATP = (R)-pantothenate + AMP + diphosphate + H(+). It participates in cofactor biosynthesis; (R)-pantothenate biosynthesis; (R)-pantothenate from (R)-pantoate and beta-alanine: step 1/1. Functionally, catalyzes the condensation of pantoate with beta-alanine in an ATP-dependent reaction via a pantoyl-adenylate intermediate. The sequence is that of Pantothenate synthetase from Clostridioides difficile (strain 630) (Peptoclostridium difficile).